We begin with the raw amino-acid sequence, 200 residues long: Matrix protein (200 aa).

Homomultimer. Interacts with viral nucleocapsid.

The protein resides in the virion membrane. The protein localises to the host endomembrane system. Its subcellular location is the host nucleus membrane. In terms of biological role, plays a major role in assembly and budding of virion, by recruiting cellular partners of the ESCRT complexes that play a key role in releasing the budding particle from the host membrane. Condensates the ribonucleocapsid core during virus assembly. This chain is Matrix protein (M), found in Tupaia (TUPV).